The following is a 196-amino-acid chain: Peptidyl-tRNA hydrolase (196 aa).

Tyrosine 14 lines the tRNA pocket. Histidine 19 acts as the Proton acceptor in catalysis. Positions 64, 66, and 112 each coordinate tRNA.

The protein belongs to the PTH family. As to quaternary structure, monomer.

Its subcellular location is the cytoplasm. It carries out the reaction an N-acyl-L-alpha-aminoacyl-tRNA + H2O = an N-acyl-L-amino acid + a tRNA + H(+). Functionally, hydrolyzes ribosome-free peptidyl-tRNAs (with 1 or more amino acids incorporated), which drop off the ribosome during protein synthesis, or as a result of ribosome stalling. Catalyzes the release of premature peptidyl moieties from peptidyl-tRNA molecules trapped in stalled 50S ribosomal subunits, and thus maintains levels of free tRNAs and 50S ribosomes. The sequence is that of Peptidyl-tRNA hydrolase from Solibacter usitatus (strain Ellin6076).